The primary structure comprises 572 residues: MWTFLGIATFTYFYKKCGDVTLANKELLLCVLVFLSLGLVLSYRCRHRHGGLLGRHQSGAQFAAFSDILSALPLIGFFWAKSPESEKKEQLESKKCRKEIGLSETTLTGAATSVSTSFVTDPEVIIVGSGVLGSALAAVLSRDGRKVTVIERDLKEPDRIVGELLQPGGYRVLQELGLGDTVEGLNAHHIHGYIVHDYESRSEVQIPYPLSETNQVQSGIAFHHGRFIMSLRKAAMAEPNVKFIEGVVLQLLEEDDAVIGVQYKDKETGDTKELHAPLTVVADGLFSKFRKSLISSKVSVSSHFVGFLMKDAPQFKPNFAELVLVNPSPVLIYQISSSETRVLVDIRGELPRNLREYMAEQIYPQLPEHLKESFLEASQNGRLRTMPASFLPPSSVNKRGVLILGDAYNLRHPLTGGGMTVALKDIKLWRQLLKDIPDLYDDAAIFQAKKSFFWSRKRTHSFVVNVLAQALYELFSATDDSLHQLRKACFLYFKLGGECVTGPVGLLSILSPHPLVLIRHFFSVAIYATYFCFKSEPWATKPRALFSSGAVLYKACSILFPLIYSEMKYLVH.

Topologically, residues 1–19 are cytoplasmic; that stretch reads MWTFLGIATFTYFYKKCGD. The interval 1–98 is interaction with MARCHF6; it reads MWTFLGIATF…EQLESKKCRK (98 aa). The stretch at 20 to 40 is an intramembrane region; it reads VTLANKELLLCVLVFLSLGLV. Topologically, residues 41 to 572 are cytoplasmic; it reads LSYRCRHRHG…IYSEMKYLVH (532 aa). Positions 61 to 72 are required for degradation in response to high membrane cholesterol levels; the sequence is QFAAFSDILSAL. Positions 116-572 are sufficient for enzyme activity; that stretch reads TSFVTDPEVI…IYSEMKYLVH (457 aa). FAD-binding positions include 131–132, 151–152, arginine 159, arginine 232, valine 248, aspartate 406, and methionine 419; these read VL and ER. Residues 514–572 form a hydrophobic; mediates interaction with membranes region; sequence PLVLIRHFFSVAIYATYFCFKSEPWATKPRALFSSGAVLYKACSILFPLIYSEMKYLVH.

Belongs to the squalene monooxygenase family. As to quaternary structure, interacts (via N-terminal domain) with MARCHF6. Interacts with SMIM22; this interaction modulates lipid droplet formation. FAD serves as cofactor. In terms of processing, ubiquitinated by MARCHF6 in response to high cholesterol levels in intracellular membranes, leading to proteasomal degradation. In terms of tissue distribution, detected in liver.

The protein localises to the microsome membrane. Its subcellular location is the endoplasmic reticulum membrane. The enzyme catalyses squalene + reduced [NADPH--hemoprotein reductase] + O2 = (S)-2,3-epoxysqualene + oxidized [NADPH--hemoprotein reductase] + H2O + H(+). The protein operates within terpene metabolism; lanosterol biosynthesis; lanosterol from farnesyl diphosphate: step 2/3. Its function is as follows. Catalyzes the stereospecific oxidation of squalene to (S)-2,3-epoxysqualene, and is considered to be a rate-limiting enzyme in steroid biosynthesis. In Mus musculus (Mouse), this protein is Squalene monooxygenase (Sqle).